The chain runs to 106 residues: Glutaredoxin-1 (106 aa).

At A2 the chain carries N-acetylalanine. Residues 3–106 enclose the Glutaredoxin domain; that stretch reads QAFVNSKIQP…TRLKQMGALQ (104 aa). The residue at position 9 (K9) is an N6-succinyllysine. Cystine bridges form between C23/C26 and C79/C83.

It belongs to the glutaredoxin family.

Its subcellular location is the cytoplasm. Has a glutathione-disulfide oxidoreductase activity in the presence of NADPH and glutathione reductase. Reduces low molecular weight disulfides and proteins. The chain is Glutaredoxin-1 (GLRX) from Bos taurus (Bovine).